The primary structure comprises 460 residues: Orexin receptor type 2 (460 aa).

Residues 1 to 54 (MSSTKLEDSLSRRNWSSASELNETQEPFLNPTDYDDEEFLRYLWREYLHPKEYE) lie on the Extracellular side of the membrane. N-linked (GlcNAc...) asparagine glycosylation is found at Asn-14 and Asn-22. Residues 33 to 49 (DYDDEEFLRYLWREYLH) are required for response to orexin-A. Residues 55–75 (WVLIAGYIIVFVVALIGNVLV) traverse the membrane as a helical segment. Over 76–88 (CVAVWKNHHMRTV) the chain is Cytoplasmic. A helical transmembrane segment spans residues 89-110 (TNYFIVNLSLADVLVTITCLPA). The Extracellular portion of the chain corresponds to 111-127 (TLVVDITETWFFGQSLC). An intrachain disulfide couples Cys-127 to Cys-210. A helical transmembrane segment spans residues 128 to 150 (KVIPYLQTVSVSVSVLTLSCIAL). Over 151–170 (DRWYAICHPLMFKSTAKRAR) the chain is Cytoplasmic. Residues 171-191 (NSIVVIWIVSCIIMIPQAIVM) form a helical membrane-spanning segment. The Extracellular portion of the chain corresponds to 192–222 (ECSSMLPGLANKTTLFTVCDEHWGGEVYPKM). Residue Asn-202 is glycosylated (N-linked (GlcNAc...) asparagine). The helical transmembrane segment at 223–243 (YHICFFLVTYMAPLCLMILAY) threads the bilayer. Residues 244–304 (LQIFRKLWCR…QIRARRKTAR (61 aa)) lie on the Cytoplasmic side of the membrane. A helical transmembrane segment spans residues 305–326 (MLMVVLLVFAICYLPISILNVL). Over 327–342 (KRVFGMFTHTEDRETV) the chain is Extracellular. A helical transmembrane segment spans residues 343-366 (YAWFTFSHWLVYANSAANPIIYNF). The Cytoplasmic segment spans residues 367 to 460 (LSGKFREEFK…SSLLSTWLEV (94 aa)).

The protein belongs to the G-protein coupled receptor 1 family. As to expression, widely expressed. Isoform 2 not detected in skeletal muscle and kidney.

It is found in the cell membrane. Its function is as follows. Nonselective, high-affinity receptor for both orexin-A and orexin-B neuropeptides. Triggers an increase in cytoplasmic Ca(2+) levels in response to orexin-A binding. The chain is Orexin receptor type 2 (Hcrtr2) from Mus musculus (Mouse).